A 228-amino-acid polypeptide reads, in one-letter code: Adenosylcobinamide-GDP ribazoletransferase (228 aa).

Transmembrane regions (helical) follow at residues Val24–Leu44, Asn50–Ala70, Ile96–Ala116, Pro117–Ala137, Val159–Tyr176, and Ile181–Leu198.

It belongs to the CobS family. It depends on Mg(2+) as a cofactor.

The protein localises to the cell membrane. The enzyme catalyses alpha-ribazole + adenosylcob(III)inamide-GDP = adenosylcob(III)alamin + GMP + H(+). It catalyses the reaction alpha-ribazole 5'-phosphate + adenosylcob(III)inamide-GDP = adenosylcob(III)alamin 5'-phosphate + GMP + H(+). It participates in cofactor biosynthesis; adenosylcobalamin biosynthesis; adenosylcobalamin from cob(II)yrinate a,c-diamide: step 7/7. In terms of biological role, joins adenosylcobinamide-GDP and alpha-ribazole to generate adenosylcobalamin (Ado-cobalamin). Also synthesizes adenosylcobalamin 5'-phosphate from adenosylcobinamide-GDP and alpha-ribazole 5'-phosphate. This Pyrococcus furiosus (strain ATCC 43587 / DSM 3638 / JCM 8422 / Vc1) protein is Adenosylcobinamide-GDP ribazoletransferase.